Reading from the N-terminus, the 238-residue chain is Uridylate kinase (238 aa).

ATP is bound at residue 12 to 15; sequence KLSG. Glycine 54 contributes to the UMP binding site. Positions 55 and 59 each coordinate ATP. UMP is bound by residues aspartate 74 and 135-142; that span reads TGNPYFST. Residues tyrosine 168 and aspartate 171 each coordinate ATP.

It belongs to the UMP kinase family. Homohexamer.

Its subcellular location is the cytoplasm. The catalysed reaction is UMP + ATP = UDP + ADP. Its pathway is pyrimidine metabolism; CTP biosynthesis via de novo pathway; UDP from UMP (UMPK route): step 1/1. With respect to regulation, inhibited by UTP. Functionally, catalyzes the reversible phosphorylation of UMP to UDP. This Syntrophomonas wolfei subsp. wolfei (strain DSM 2245B / Goettingen) protein is Uridylate kinase.